A 453-amino-acid chain; its full sequence is Chromosomal replication initiator protein DnaA (453 aa).

The segment at 1–73 is domain I, interacts with DnaA modulators; the sequence is MNISPQYLWN…AQEVASVVGY (73 aa). The tract at residues 73–112 is domain II; it reads YPVDIQLTTAEGETMAMTGEAQSYQEKSLTQIAPESPKLN. Positions 113–329 are domain III, AAA+ region; the sequence is QLNPRYTFSR…GALIRAIAYT (217 aa). Residues Gly157, Gly159, Lys160, and Thr161 each contribute to the ATP site. The interval 330 to 453 is domain IV, binds dsDNA; sequence SISGLSMTVQ…RINMASRTQS (124 aa).

Belongs to the DnaA family. As to quaternary structure, oligomerizes as a right-handed, spiral filament on DNA at oriC.

The protein localises to the cytoplasm. Its function is as follows. Plays an essential role in the initiation and regulation of chromosomal replication. ATP-DnaA binds to the origin of replication (oriC) to initiate formation of the DNA replication initiation complex once per cell cycle. Binds the DnaA box (a 9 base pair repeat at the origin) and separates the double-stranded (ds)DNA. Forms a right-handed helical filament on oriC DNA; dsDNA binds to the exterior of the filament while single-stranded (ss)DNA is stabiized in the filament's interior. The ATP-DnaA-oriC complex binds and stabilizes one strand of the AT-rich DNA unwinding element (DUE), permitting loading of DNA polymerase. After initiation quickly degrades to an ADP-DnaA complex that is not apt for DNA replication. Binds acidic phospholipids. This Rippkaea orientalis (strain PCC 8801 / RF-1) (Cyanothece sp. (strain PCC 8801)) protein is Chromosomal replication initiator protein DnaA.